Reading from the N-terminus, the 143-residue chain is Large ribosomal subunit protein uL11 (143 aa).

The protein belongs to the universal ribosomal protein uL11 family. Part of the ribosomal stalk of the 50S ribosomal subunit. Interacts with L10 and the large rRNA to form the base of the stalk. L10 forms an elongated spine to which L12 dimers bind in a sequential fashion forming a multimeric L10(L12)X complex. In terms of processing, one or more lysine residues are methylated.

In terms of biological role, forms part of the ribosomal stalk which helps the ribosome interact with GTP-bound translation factors. The protein is Large ribosomal subunit protein uL11 of Clavibacter sepedonicus (Clavibacter michiganensis subsp. sepedonicus).